Here is a 329-residue protein sequence, read N- to C-terminus: Cytosolic sulfotransferase 6 (329 aa).

74-79 (KCGTTW) serves as a coordination point for 3'-phosphoadenylyl sulfate. The Proton acceptor role is filled by His-140. 3'-phosphoadenylyl sulfate-binding positions include Arg-162, Ser-170, and 295–297 (RKG).

The protein belongs to the sulfotransferase 1 family.

Its subcellular location is the cytoplasm. In terms of biological role, sulfotransferase that utilizes 3'-phospho-5'-adenylyl sulfate (PAPS) as sulfonate donor. The protein is Cytosolic sulfotransferase 6 (SOT6) of Arabidopsis thaliana (Mouse-ear cress).